Reading from the N-terminus, the 514-residue chain is Exoglucanase 1 (514 aa).

Positions 1–17 are cleaved as a signal peptide; it reads MYRKLAVISAFLATARA. Q18 carries the pyrrolidone carboxylic acid modification. The catalytic stretch occupies residues 18–453; sequence QSACTLQSET…GSTGNPSGGN (436 aa). 10 disulfides stabilise this stretch: C21–C89, C36–C42, C67–C88, C78–C84, C155–C414, C189–C227, C193–C226, C247–C273, C255–C260, and C278–C348. N62 carries an N-linked (GlcNAc) asparagine glycan. E229 serves as the catalytic Nucleophile. E234 functions as the Proton donor/acceptor in the catalytic mechanism. N-linked (GlcNAc...) (high mannose) asparagine glycosylation occurs at N287. N401 carries N-linked (GlcNAc) asparagine glycosylation. Over residues 401–437 the composition is skewed to polar residues; that stretch reads NETSSTPGAVRGSCSTSSGVPAQVESQSPNAKVTFSN. The interval 401–481 is disordered; the sequence is NETSSTPGAV…TGSSPGPTQS (81 aa). A linker region spans residues 454-478; the sequence is PPGGNPPGTTTTRRPATTTGSSPGP. Over residues 460–479 the composition is skewed to low complexity; it reads PGTTTTRRPATTTGSSPGPT. T462 carries O-linked (Man) threonine glycosylation. 3 O-linked (Man...) threonine glycosylation sites follow: T463, T464, and T465. An O-linked (Man) threonine glycan is attached at T470. Residues T471 and T472 are each glycosylated (O-linked (Man...) threonine). S474 and S475 each carry an O-linked (Man) serine glycan. The region spanning 478–514 is the CBM1 domain; sequence PTQSHYGQCGGIGYSGPTVCASGTTCQVLNPYYSQCL. T479 is a glycosylation site (O-linked (Man) threonine). 2 O-linked (Man) serine glycosylation sites follow: S481 and S492. 2 disulfides stabilise this stretch: C486-C503 and C497-C513.

This sequence belongs to the glycosyl hydrolase 7 (cellulase C) family. N-glycosylated. A high mannose glycan is attached to Asn-287 (predominantly Man(8)GlcNAc(2)) and single GlcNAc occupancy is observed at Asn-62 and Asn-401 with some site heterogeneity depending on strains and fermentation conditions. In terms of processing, O-glycosylated. Within the linker domain, all 8 threonines are variably glycosylated with between at least one, and up to three, mannose residues per site. All serines in this domain are at least partially glycosylated with a single mannose residue. O-glycosylation of the cellulase linker provides protection from proteolysis. Linker glycans also contribute to binding affinity of cellobiohydrolases to cellulose.

Its subcellular location is the secreted. The enzyme catalyses Hydrolysis of (1-&gt;4)-beta-D-glucosidic linkages in cellulose and cellotetraose, releasing cellobiose from the non-reducing ends of the chains.. In terms of biological role, exocellobiohydrolases (CBH) that catalyzes the hydrolysis of 1,4-beta-D-glucosidic bonds in cellulose to release the disaccharide cellobiose. The degradation of cellulose involves an interplay between different cellulolytic enzymes. Hydrolysis starts with endoglucanases (EGs), which cut internal beta-1,4-glucosidic bonds in cellulose to reduce the polymerization degree of the substrate and create new chain ends for exocellobiohydrolases (CBHs). The CBHs release the disaccharide cellobiose from the non-reducing end of the cellulose polymer chain. Finally, beta-1,4-glucosidases hydrolyze the cellobiose and other short cello-oligosaccharides into glucose units. This chain is Exoglucanase 1 (cbh1), found in Hypocrea jecorina (strain ATCC 56765 / BCRC 32924 / NRRL 11460 / Rut C-30) (Trichoderma reesei).